Here is a 360-residue protein sequence, read N- to C-terminus: MDIKMDNFTTPSAASLESDCDLYAHHHTARILMPLHYSIVFIIGLVGNLLALIVIIQNRKKINSTTLYSTNLVISDILFTTALPTRIAYYALGFDWRIGDALCRITALVFYINTYAGVNFMTCLSIDRFFAVVHPLRYNKIKRIEHAKCICIFVWILVFGQTLPLLINPMSKQEAERTTCMEYPNFEETKSLPWILLGACFIGYVLPLVIILICYSQICCKLFKTAKQNPLTEKSGVNKKALNTIIFIIVVFVVCFTPYHVAIIQHMIKKLRLPGLLECSQRHSFQISLHFTVCLMNFNCCMDPFIYFFACKGYKRKVMKMLKRQVSVSISSAVRSAPEENSREMTETQMMIHSKSLNGK.

The Extracellular portion of the chain corresponds to 1–30 (MDIKMDNFTTPSAASLESDCDLYAHHHTAR). A glycan (N-linked (GlcNAc...) asparagine) is linked at N7. A helical transmembrane segment spans residues 31–56 (ILMPLHYSIVFIIGLVGNLLALIVII). Residues 57–76 (QNRKKINSTTLYSTNLVISD) are Cytoplasmic-facing. A helical transmembrane segment spans residues 77 to 94 (ILFTTALPTRIAYYALGF). Residue R86 coordinates 7alpha,25-dihydroxycholesterol. The Extracellular portion of the chain corresponds to 95 to 104 (DWRIGDALCR). C103 and C180 are oxidised to a cystine. Residues 105 to 126 (ITALVFYINTYAGVNFMTCLSI) form a helical membrane-spanning segment. 2 residues coordinate 7alpha,25-dihydroxycholesterol: Y111 and Y115. The interval 125-133 (SIDRFFAVV) is interaction with G proteins. The Cytoplasmic portion of the chain corresponds to 127–148 (DRFFAVVHPLRYNKIKRIEHAK). A helical transmembrane segment spans residues 149-167 (CICIFVWILVFGQTLPLLI). Residues 168 to 191 (NPMSKQEAERTTCMEYPNFEETKS) lie on the Extracellular side of the membrane. Residues 192–214 (LPWILLGACFIGYVLPLVIILIC) traverse the membrane as a helical segment. Topologically, residues 215 to 240 (YSQICCKLFKTAKQNPLTEKSGVNKK) are cytoplasmic. The chain crosses the membrane as a helical span at residues 241 to 264 (ALNTIIFIIVVFVVCFTPYHVAII). A 7alpha,25-dihydroxycholesterol-binding site is contributed by Y259. At 265–286 (QHMIKKLRLPGLLECSQRHSFQ) the chain is on the extracellular side. A helical membrane pass occupies residues 287 to 311 (ISLHFTVCLMNFNCCMDPFIYFFAC). Topologically, residues 312–360 (KGYKRKVMKMLKRQVSVSISSAVRSAPEENSREMTETQMMIHSKSLNGK) are cytoplasmic. Phosphoserine is present on S327. The disordered stretch occupies residues 339 to 360 (EENSREMTETQMMIHSKSLNGK). Residues 347 to 360 (ETQMMIHSKSLNGK) show a composition bias toward polar residues.

Belongs to the G-protein coupled receptor 1 family. Homodimer and heterodimer. Heterodimerizes with CXCR5; leading to modulate the interaction between of CXCL13 and CXCR5.

It localises to the cell membrane. In terms of biological role, G-protein coupled receptor expressed in lymphocytes that acts as a chemotactic receptor for B-cells, T-cells, splenic dendritic cells, monocytes/macrophages and astrocytes. Receptor for oxysterol 7-alpha,25-dihydroxycholesterol (7-alpha,25-OHC) and other related oxysterols. Mediates cell positioning and movement of a number of cells by binding the 7-alpha,25-OHC ligand that forms a chemotactic gradient. Binding of 7-alpha,25-OHC mediates the correct localization of B-cells during humoral immune responses. Guides B-cell movement along the B-cell zone-T-cell zone boundary and later to interfollicular and outer follicular regions. Its specific expression during B-cell maturation helps position B-cells appropriately for mounting T-dependent antibody responses. Collaborates with CXCR5 to mediate B-cell migration; probably by forming a heterodimer with CXCR5 that affects the interaction between of CXCL13 and CXCR5. Also acts as a chemotactic receptor for some T-cells upon binding to 7-alpha,25-OHC ligand. Promotes follicular helper T (Tfh) cells differentiation by positioning activated T-cells at the follicle-T-zone interface, promoting contact of newly activated CD4 T-cells with activated dendritic cells and exposing them to Tfh-cell-promoting inducible costimulator (ICOS) ligand. Expression in splenic dendritic cells is required for their homeostasis, localization and ability to induce B- and T-cell responses: GPR183 acts as a chemotactic receptor in dendritic cells that mediates the accumulation of CD4(+) dendritic cells in bridging channels. Regulates migration of astrocytes and is involved in communication between astrocytes and macrophages. Promotes osteoclast precursor migration to bone surfaces. Signals constitutively through G(i)-alpha, but not G(s)-alpha or G(q)-alpha. Signals constitutively also via MAPK1/3 (ERK1/2). The polypeptide is G-protein coupled receptor 183 (GPR183) (Bos taurus (Bovine)).